Here is a 496-residue protein sequence, read N- to C-terminus: Squalene epoxidase ERG1 (496 aa).

The helical transmembrane segment at 4–24 threads the bilayer; it reads VKYDAIIIGAGVIGPTIATAF. FAD is bound by residues 15 to 16, 35 to 36, Arg-43, Arg-148, Val-164, Asp-332, and Met-345; these read VI and ER. The next 2 membrane-spanning stretches (helical) occupy residues 431–451 and 466–486; these read IGLLSGMLPFPMLLFNHFFSV and LGFPLALFEAFEVLFTAIVIF.

It belongs to the squalene monooxygenase family. FAD is required as a cofactor.

It localises to the microsome membrane. The protein resides in the endoplasmic reticulum membrane. It carries out the reaction squalene + reduced [NADPH--hemoprotein reductase] + O2 = (S)-2,3-epoxysqualene + oxidized [NADPH--hemoprotein reductase] + H2O + H(+). The protein operates within terpene metabolism; lanosterol biosynthesis; lanosterol from farnesyl diphosphate: step 2/3. With respect to regulation, activity is completely abolished by Triton X-100, deoxycholate or Cu(2+), and partially inhibited by thiol reagents, rotenone and antimycin A. The allylamine antimycotic agents naftifine and SF 86-327are potent inhibitors and show apparently non-competitive kinetics with respect to the substrate squalene. Squalene epoxidase; part of the third module of ergosterol biosynthesis pathway that includes the late steps of the pathway. Erg1 catalyzes the epoxidation of squalene into 2,3-epoxysqualene. The third module or late pathway involves the ergosterol synthesis itself through consecutive reactions that mainly occur in the endoplasmic reticulum (ER) membrane. Firstly, the squalene synthase ERG9 catalyzes the condensation of 2 farnesyl pyrophosphate moieties to form squalene, which is the precursor of all steroids. Squalene synthase is crucial for balancing the incorporation of farnesyl diphosphate (FPP) into sterol and nonsterol isoprene synthesis. Secondly, the squalene epoxidase ERG1 catalyzes the stereospecific oxidation of squalene to (S)-2,3-epoxysqualene, which is considered to be a rate-limiting enzyme in steroid biosynthesis. Then, the lanosterol synthase ERG7 catalyzes the cyclization of (S)-2,3 oxidosqualene to lanosterol, a reaction that forms the sterol core. In the next steps, lanosterol is transformed to zymosterol through a complex process involving various demethylation, reduction and desaturation reactions. The lanosterol 14-alpha-demethylase ERG11 (also known as CYP51) catalyzes C14-demethylation of lanosterol to produce 4,4'-dimethyl cholesta-8,14,24-triene-3-beta-ol, which is critical for ergosterol biosynthesis. The C-14 reductase ERG24 reduces the C14=C15 double bond of 4,4-dimethyl-cholesta-8,14,24-trienol to produce 4,4-dimethyl-cholesta-8,24-dienol. 4,4-dimethyl-cholesta-8,24-dienol is substrate of the C-4 demethylation complex ERG25-ERG26-ERG27 in which ERG25 catalyzes the three-step monooxygenation required for the demethylation of 4,4-dimethyl and 4alpha-methylsterols, ERG26 catalyzes the oxidative decarboxylation that results in a reduction of the 3-beta-hydroxy group at the C-3 carbon to an oxo group, and ERG27 is responsible for the reduction of the keto group on the C-3. ERG28 has a role as a scaffold to help anchor ERG25, ERG26 and ERG27 to the endoplasmic reticulum and ERG29 regulates the activity of the iron-containing C4-methylsterol oxidase ERG25. Then, the sterol 24-C-methyltransferase ERG6 catalyzes the methyl transfer from S-adenosyl-methionine to the C-24 of zymosterol to form fecosterol. The C-8 sterol isomerase ERG2 catalyzes the reaction which results in unsaturation at C-7 in the B ring of sterols and thus converts fecosterol to episterol. The sterol-C5-desaturase ERG3 then catalyzes the introduction of a C-5 double bond in the B ring to produce 5-dehydroepisterol. The C-22 sterol desaturase ERG5 further converts 5-dehydroepisterol into ergosta-5,7,22,24(28)-tetraen-3beta-ol by forming the C-22(23) double bond in the sterol side chain. Finally, ergosta-5,7,22,24(28)-tetraen-3beta-ol is substrate of the C-24(28) sterol reductase ERG4 to produce ergosterol. The polypeptide is Squalene epoxidase ERG1 (Candida albicans (strain SC5314 / ATCC MYA-2876) (Yeast)).